Consider the following 203-residue polypeptide: MSEEISFVKEIDTGVEGLPKPEVKIENIVATVILENQLDLNLIETKIQDVDYNPDQFPGLVYRLESPRVTVLIFKSGKMVITGAKSINQLIHVVKKLLKAFADQGIPISGKPQIQIQNIVASANLKVYIDLEKAALEFENSLYEPEQFPGLIYRMDEPRVVMLIFSSGKMVITGAKMENEVYDAVKKVARKLKEADAIIGIAE.

2 tandem repeats follow at residues 25-101 and 116-192.

The protein belongs to the TBP family.

In terms of biological role, general factor that plays a role in the activation of archaeal genes transcribed by RNA polymerase. Binds specifically to the TATA box promoter element which lies close to the position of transcription initiation. This is TATA-box-binding protein (tbp) from Aeropyrum pernix (strain ATCC 700893 / DSM 11879 / JCM 9820 / NBRC 100138 / K1).